A 124-amino-acid polypeptide reads, in one-letter code: uncharacterized protein (124 aa).

A helical transmembrane segment spans residues 13–33 (IIFMALYFVITGIVIRLIGYS).

Its subcellular location is the membrane. This is an uncharacterized protein from Bacillus anthracis.